Reading from the N-terminus, the 252-residue chain is 5'-nucleotidase SurE (252 aa).

Residues aspartate 8, aspartate 9, serine 39, and asparagine 91 each contribute to the a divalent metal cation site.

The protein belongs to the SurE nucleotidase family. A divalent metal cation serves as cofactor.

The protein resides in the cytoplasm. The enzyme catalyses a ribonucleoside 5'-phosphate + H2O = a ribonucleoside + phosphate. In terms of biological role, nucleotidase that shows phosphatase activity on nucleoside 5'-monophosphates. The sequence is that of 5'-nucleotidase SurE from Paraburkholderia xenovorans (strain LB400).